Consider the following 232-residue polypeptide: 7-cyano-7-deazaguanine synthase (232 aa).

An ATP-binding site is contributed by 8 to 18 (FSGGQDSTTCL). Zn(2+)-binding residues include Cys187, Cys196, Cys199, and Cys202.

It belongs to the QueC family. Requires Zn(2+) as cofactor.

It carries out the reaction 7-carboxy-7-deazaguanine + NH4(+) + ATP = 7-cyano-7-deazaguanine + ADP + phosphate + H2O + H(+). Its pathway is purine metabolism; 7-cyano-7-deazaguanine biosynthesis. In terms of biological role, catalyzes the ATP-dependent conversion of 7-carboxy-7-deazaguanine (CDG) to 7-cyano-7-deazaguanine (preQ(0)). The polypeptide is 7-cyano-7-deazaguanine synthase (Vibrio campbellii (strain ATCC BAA-1116)).